The sequence spans 991 residues: Adhesion G-protein coupled receptor F3 (991 aa).

The N-terminal stretch at 1–20 (MSSLALSQLLLAVTLPLLEL) is a signal peptide. Topologically, residues 21–694 (EPTFVPTAQS…ENPTLDLLSQ (674 aa)) are extracellular. Asn75, Asn102, Asn118, Asn321, Asn362, Asn484, Asn571, Asn589, Asn630, and Asn660 each carry an N-linked (GlcNAc...) asparagine glycan. Residues 519 to 684 (HPFSFSSANV…SILMSQHTVP (166 aa)) form the GAIN-B domain. Disulfide bonds link Cys635-Cys666 and Cys654-Cys668. The tract at residues 635 to 684 (CVFWDHRVFQGQGGWSDEGCEVHAANASITQCICQHLTAFSILMSQHTVP) is GPS. Residues 695–715 (VGTGASVLALLVCLAIYGLVW) form a helical membrane-spanning segment. At 716–730 (RVVVRNKVAFFRHTT) the chain is on the cytoplasmic side. The chain crosses the membrane as a helical span at residues 731–751 (LFNMVICLLVADTCFLGSPFL). Residues 752–757 (PSGYHS) are Extracellular-facing. The helical transmembrane segment at 758–778 (LICLVTAFLCHFFYLATFFWM) threads the bilayer. Topologically, residues 779 to 799 (LAQALVLAHQLLFVFHQLSKH) are cytoplasmic. The chain crosses the membrane as a helical span at residues 800–820 (VVLSLMVMLGYLCPLGFAGVT). At 821 to 850 (LGLYLPQRKYLWEGKCFLNGGGVMLYSFSE) the chain is on the extracellular side. A helical membrane pass occupies residues 851-871 (PVLAIVGVNGLVLVIAVLKLL). Residues 872–892 (RPSLSEGPTVEKRQALVGVLK) are Cytoplasmic-facing. Residues 893–913 (ALLILTPIFGLTWGLGVATLF) form a helical membrane-spanning segment. The Extracellular portion of the chain corresponds to 914-916 (DGS). The helical transmembrane segment at 917–937 (IVSHYAFSILNSLQGVFILVF) threads the bilayer. The Cytoplasmic portion of the chain corresponds to 938-991 (GCLTDKKVLEALRKRLRGSRSSNSAISMVTNETYTSEHSKERSEPASYEERMTD). The segment at 964–991 (SMVTNETYTSEHSKERSEPASYEERMTD) is disordered. Residues 972-991 (TSEHSKERSEPASYEERMTD) are compositionally biased toward basic and acidic residues.

The protein belongs to the G-protein coupled receptor 2 family. Adhesion G-protein coupled receptor (ADGR) subfamily. In terms of assembly, heterodimer of 2 chains generated by proteolytic processing; the large extracellular N-terminal fragment and the membrane-bound C-terminal fragment predominantly remain associated and non-covalently linked. Autoproteolytically processed at the GPS region of the GAIN-B domain; this cleavage modulates receptor activity. In terms of tissue distribution, expression is restricted to testis and circumvallate papillae.

Its subcellular location is the membrane. Functionally, orphan receptor. The sequence is that of Adhesion G-protein coupled receptor F3 (ADGRF3) from Mus musculus (Mouse).